Consider the following 367-residue polypeptide: 2-aminoethylphosphonate--pyruvate transaminase (367 aa).

Residue Lys-194 is modified to N6-(pyridoxal phosphate)lysine.

Belongs to the class-V pyridoxal-phosphate-dependent aminotransferase family. PhnW subfamily. Homodimer. It depends on pyridoxal 5'-phosphate as a cofactor.

It catalyses the reaction (2-aminoethyl)phosphonate + pyruvate = phosphonoacetaldehyde + L-alanine. Its function is as follows. Involved in phosphonate degradation. The chain is 2-aminoethylphosphonate--pyruvate transaminase from Salmonella choleraesuis (strain SC-B67).